A 275-amino-acid polypeptide reads, in one-letter code: tRNA pseudouridine synthase A (275 aa).

Asp62 acts as the Nucleophile in catalysis. Tyr124 contacts substrate.

This sequence belongs to the tRNA pseudouridine synthase TruA family. As to quaternary structure, homodimer.

The catalysed reaction is uridine(38/39/40) in tRNA = pseudouridine(38/39/40) in tRNA. Formation of pseudouridine at positions 38, 39 and 40 in the anticodon stem and loop of transfer RNAs. The polypeptide is tRNA pseudouridine synthase A (Herminiimonas arsenicoxydans).